The primary structure comprises 612 residues: Zinc metalloproteinase-disintegrin-like 8 (612 aa).

The first 20 residues, 1-20, serve as a signal peptide directing secretion; it reads MIQVLLVTICLAVFPYQGSS. The propeptide occupies 21–189; it reads IILGSGNVND…KKASQLNLTP (169 aa). Positions 199 to 395 constitute a Peptidase M12B domain; it reads KYIELVIVAD…NRPPCILNKP (197 aa). Glu-202 provides a ligand contact to Ca(2+). Asn-218 carries an N-linked (GlcNAc...) asparagine glycan. Residue Asp-286 participates in Ca(2+) binding. Cystine bridges form between Cys-310–Cys-390, Cys-350–Cys-374, and Cys-352–Cys-357. His-335 serves as a coordination point for Zn(2+). Residue Glu-336 is part of the active site. Residues His-339 and His-345 each contribute to the Zn(2+) site. The Ca(2+) site is built by Cys-390, Asn-393, Val-405, Asn-408, Phe-410, Glu-412, Glu-415, and Asp-418. A Disintegrin domain is found at 403–489; that stretch reads PPVCGNYFVE…DCPTDDFQRN (87 aa). 14 cysteine pairs are disulfide-bonded: Cys-406–Cys-435, Cys-417–Cys-430, Cys-419–Cys-425, Cys-429–Cys-452, Cys-443–Cys-449, Cys-448–Cys-474, Cys-461–Cys-481, Cys-468–Cys-500, Cys-493–Cys-505, Cys-512–Cys-562, Cys-527–Cys-573, Cys-540–Cys-550, Cys-557–Cys-599, and Cys-593–Cys-605. The D/ECD-tripeptide motif lies at 467–469; sequence ECD. N-linked (GlcNAc...) asparagine glycosylation occurs at Asn-502.

The protein belongs to the venom metalloproteinase (M12B) family. P-III subfamily. Zn(2+) serves as cofactor. As to expression, expressed by the venom gland.

It is found in the secreted. Functionally, snake venom metalloproteinase that impairs hemostasis in the envenomed animal. The protein is Zinc metalloproteinase-disintegrin-like 8 of Crotalus adamanteus (Eastern diamondback rattlesnake).